Consider the following 370-residue polypeptide: Ribosomal RNA small subunit methyltransferase H (370 aa).

Residues 85-87 (GGH), Asp-104, Tyr-131, Asp-152, and Gln-159 each bind S-adenosyl-L-methionine. Basic and acidic residues-rich tracts occupy residues 332-345 (GAERATPEEIERNP) and 353-370 (RALEKVAGRPTTARRDAR). Positions 332–370 (GAERATPEEIERNPRSAPVRLRALEKVAGRPTTARRDAR) are disordered.

Belongs to the methyltransferase superfamily. RsmH family.

It is found in the cytoplasm. The catalysed reaction is cytidine(1402) in 16S rRNA + S-adenosyl-L-methionine = N(4)-methylcytidine(1402) in 16S rRNA + S-adenosyl-L-homocysteine + H(+). Specifically methylates the N4 position of cytidine in position 1402 (C1402) of 16S rRNA. The sequence is that of Ribosomal RNA small subunit methyltransferase H from Mycobacterium sp. (strain KMS).